Here is a 303-residue protein sequence, read N- to C-terminus: Ribonuclease Z (303 aa).

Zn(2+)-binding residues include H61, H63, D65, H66, H138, D206, and H265. D65 functions as the Proton acceptor in the catalytic mechanism.

The protein belongs to the RNase Z family. Homodimer. It depends on Zn(2+) as a cofactor.

It catalyses the reaction Endonucleolytic cleavage of RNA, removing extra 3' nucleotides from tRNA precursor, generating 3' termini of tRNAs. A 3'-hydroxy group is left at the tRNA terminus and a 5'-phosphoryl group is left at the trailer molecule.. Functionally, zinc phosphodiesterase, which displays some tRNA 3'-processing endonuclease activity. Probably involved in tRNA maturation, by removing a 3'-trailer from precursor tRNA. This is Ribonuclease Z from Agathobacter rectalis (strain ATCC 33656 / DSM 3377 / JCM 17463 / KCTC 5835 / VPI 0990) (Eubacterium rectale).